A 414-amino-acid polypeptide reads, in one-letter code: Probable cell wall biosynthesis protein LcpB (414 aa).

The disordered stretch occupies residues 1–108 (MDSPGQGEIA…PPVIAGDGGR (108 aa)). The Cytoplasmic portion of the chain corresponds to 1 to 120 (MDSPGQGEIA…KAISFKPRGC (120 aa)). A compositionally biased stretch (basic and acidic residues) spans 9 to 23 (IARDSQGRPILDRYG). Residues 33–42 (RQTPPTPRTP) are compositionally biased toward pro residues. The span at 43-53 (PVNETRVYQPR) shows a compositional bias: low complexity. The segment covering 54–80 (QTPPRQTPPRQTPPRQMPPRQTPPRQV) has biased composition (pro residues). The helical transmembrane segment at 121 to 141 (LGTIAGVLAVGLVLVFVVTLW) threads the bilayer. Topologically, residues 142–414 (ADSKLNRVDA…GAEALFSSMR (273 aa)) are periplasmic.

It belongs to the LytR/CpsA/Psr (LCP) family.

The protein localises to the cell inner membrane. The polypeptide is Probable cell wall biosynthesis protein LcpB (Corynebacterium glutamicum (strain ATCC 13032 / DSM 20300 / JCM 1318 / BCRC 11384 / CCUG 27702 / LMG 3730 / NBRC 12168 / NCIMB 10025 / NRRL B-2784 / 534)).